The chain runs to 594 residues: DNA polymerase epsilon subunit B (594 aa).

The protein belongs to the DNA polymerase epsilon subunit B family. In terms of assembly, heterotetramer. Consists of four subunits: pol2, dpb2, dpb3 and dpb4. Interacts with dpb3.

The protein localises to the nucleus. In terms of biological role, as accessory component of the DNA polymerase epsilon (DNA polymerase II) participates in chromosomal DNA replication. The polypeptide is DNA polymerase epsilon subunit B (dpb2) (Schizosaccharomyces pombe (strain 972 / ATCC 24843) (Fission yeast)).